The primary structure comprises 623 residues: Serine/threonine-protein kinase ArnS (623 aa).

The next 2 membrane-spanning stretches (helical) occupy residues 13–33 and 49–69; these read MILI…GIVL and VYLI…QSLI. Residues 317–623 form the Protein kinase domain; the sequence is YRVIEVIGLG…SYDIVKILEG (307 aa). ATP contacts are provided by residues 323 to 331 and K344; that span reads IGLGGNGYV. D460 acts as the Proton acceptor in catalysis.

The protein belongs to the protein kinase superfamily. Ser/Thr protein kinase family. Post-translationally, autophosphorylated.

It localises to the cell membrane. It carries out the reaction L-seryl-[protein] + ATP = O-phospho-L-seryl-[protein] + ADP + H(+). The enzyme catalyses L-threonyl-[protein] + ATP = O-phospho-L-threonyl-[protein] + ADP + H(+). Autophosphorylation is stimulated by Mn(2+). Plays an essential role in the controlled expression of archaellum components during starvation-induced motility. May inhibit arnR transcription and promote ArnR translation. This chain is Serine/threonine-protein kinase ArnS, found in Sulfolobus acidocaldarius (strain ATCC 33909 / DSM 639 / JCM 8929 / NBRC 15157 / NCIMB 11770).